Consider the following 327-residue polypeptide: tRNA(Ile)-lysidine synthase (327 aa).

32 to 37 (SGGQDS) is a binding site for ATP.

This sequence belongs to the tRNA(Ile)-lysidine synthase family.

It localises to the cytoplasm. The catalysed reaction is cytidine(34) in tRNA(Ile2) + L-lysine + ATP = lysidine(34) in tRNA(Ile2) + AMP + diphosphate + H(+). In terms of biological role, ligates lysine onto the cytidine present at position 34 of the AUA codon-specific tRNA(Ile) that contains the anticodon CAU, in an ATP-dependent manner. Cytidine is converted to lysidine, thus changing the amino acid specificity of the tRNA from methionine to isoleucine. The protein is tRNA(Ile)-lysidine synthase of Synechococcus sp. (strain JA-2-3B'a(2-13)) (Cyanobacteria bacterium Yellowstone B-Prime).